Consider the following 408-residue polypeptide: tRNA(Ile)-lysidine synthase (408 aa).

Residue 27 to 32 coordinates ATP; that stretch reads SGGGDS.

The protein belongs to the tRNA(Ile)-lysidine synthase family.

The protein localises to the cytoplasm. The enzyme catalyses cytidine(34) in tRNA(Ile2) + L-lysine + ATP = lysidine(34) in tRNA(Ile2) + AMP + diphosphate + H(+). Functionally, ligates lysine onto the cytidine present at position 34 of the AUA codon-specific tRNA(Ile) that contains the anticodon CAU, in an ATP-dependent manner. Cytidine is converted to lysidine, thus changing the amino acid specificity of the tRNA from methionine to isoleucine. The protein is tRNA(Ile)-lysidine synthase of Caulobacter vibrioides (strain ATCC 19089 / CIP 103742 / CB 15) (Caulobacter crescentus).